Here is a 617-residue protein sequence, read N- to C-terminus: Ceramide transfer protein (617 aa).

Residues 1 to 11 are compositionally biased toward polar residues; the sequence is MSDNQSWNSSG. Residues 1–23 are disordered; that stretch reads MSDNQSWNSSGSEEDLEPESGPP. Residues 23–117 enclose the PH domain; that stretch reads PVERCGVLSK…WIDSIEQHKS (95 aa). Residues 268 to 302 adopt a coiled-coil conformation; that stretch reads REDSWQKRLDKEIEKRRRVEEAYKNAMTELKKKSH. The FFAT signature appears at 320–326; sequence EFFDAVE. The tract at residues 341-382 is disordered; it reads EKGRSHWPPSPPSSEAHTAAGSHRLVQAPPSCPPPTDLVSSS. In terms of domain architecture, START spans 383–611; that stretch reads DEHRFRIQVE…FTSYVQEKTA (229 aa). E466, Q487, N524, and Y572 together coordinate an N-acylsphing-4-enine.

It is found in the cytoplasm. Its subcellular location is the golgi apparatus. The protein localises to the endoplasmic reticulum. It carries out the reaction N-hexadecanoylsphing-4-enine(in) = N-hexadecanoylsphing-4-enine(out). May mediate the intracellular trafficking of ceramide in a non-vesicular manner. The sequence is that of Ceramide transfer protein (cert1) from Xenopus laevis (African clawed frog).